A 158-amino-acid polypeptide reads, in one-letter code: NAD(P)H-quinone oxidoreductase subunit J, chloroplastic (158 aa).

This sequence belongs to the complex I 30 kDa subunit family. NDH is composed of at least 16 different subunits, 5 of which are encoded in the nucleus.

It is found in the plastid. Its subcellular location is the chloroplast thylakoid membrane. The catalysed reaction is a plastoquinone + NADH + (n+1) H(+)(in) = a plastoquinol + NAD(+) + n H(+)(out). It carries out the reaction a plastoquinone + NADPH + (n+1) H(+)(in) = a plastoquinol + NADP(+) + n H(+)(out). NDH shuttles electrons from NAD(P)H:plastoquinone, via FMN and iron-sulfur (Fe-S) centers, to quinones in the photosynthetic chain and possibly in a chloroplast respiratory chain. The immediate electron acceptor for the enzyme in this species is believed to be plastoquinone. Couples the redox reaction to proton translocation, and thus conserves the redox energy in a proton gradient. This is NAD(P)H-quinone oxidoreductase subunit J, chloroplastic from Nymphaea alba (White water-lily).